Consider the following 633-residue polypeptide: Chaperone protein HtpG (633 aa).

The a; substrate-binding stretch occupies residues 1-341; sequence MSATSSKETL…SADLPLNVSR (341 aa). Positions 342–558 are b; the sequence is EILQSSRDID…EGDMSANLER (217 aa). Residues 559-633 form a c region; the sequence is LLKAAGQAAP…LNGLLAMLPG (75 aa).

The protein belongs to the heat shock protein 90 family. As to quaternary structure, homodimer.

The protein localises to the cytoplasm. Functionally, molecular chaperone. Has ATPase activity. The polypeptide is Chaperone protein HtpG (Thiobacillus denitrificans (strain ATCC 25259 / T1)).